A 341-amino-acid chain; its full sequence is Enduracididine beta-hydroxylase (341 aa).

The Fe cation site is built by His-146 and Glu-148. The interval 203 to 223 is disordered; the sequence is HRIHGKAPGDESARESALRER. Residue His-300 coordinates Fe cation.

This sequence belongs to the clavaminate synthase family. It depends on Fe(2+) as a cofactor.

The enzyme catalyses L-enduracididine + 2-oxoglutarate + O2 = (3S)-3-hydroxy-L-enduracididine + succinate + CO2. It functions in the pathway antibiotic biosynthesis. Its function is as follows. Hydroxylates the beta carbon of free L-enduracididine to produce (3S)-3-hydroxy-L-enduracididine in biosynthesis of the nonproteinogenic amino acid beta-hydroxyenduracididine, a component of antibiotic mannopeptimycin. The sequence is that of Enduracididine beta-hydroxylase (mppO) from Streptomyces hygroscopicus.